Consider the following 248-residue polypeptide: Stress-related protein (248 aa).

The protein belongs to the REF/SRPP family.

This is Stress-related protein (SRP) from Vitis riparia (Frost grape).